The following is a 326-amino-acid chain: Tagatose 1,6-diphosphate aldolase (326 aa).

This sequence belongs to the aldolase LacD family.

It carries out the reaction D-tagatofuranose 1,6-bisphosphate = D-glyceraldehyde 3-phosphate + dihydroxyacetone phosphate. It functions in the pathway carbohydrate metabolism; D-tagatose 6-phosphate degradation; D-glyceraldehyde 3-phosphate and glycerone phosphate from D-tagatose 6-phosphate: step 2/2. In Staphylococcus aureus (strain MW2), this protein is Tagatose 1,6-diphosphate aldolase.